Consider the following 111-residue polypeptide: Universal stress protein B (111 aa).

Transmembrane regions (helical) follow at residues 1-21 (MIST…NMAR) and 90-110 (FILT…LLIW).

This sequence belongs to the universal stress protein B family.

It is found in the cell inner membrane. This is Universal stress protein B from Enterobacter sp. (strain 638).